A 226-amino-acid chain; its full sequence is Ornithine decarboxylase antizyme (226 aa).

It belongs to the ODC antizyme family. In terms of assembly, interacts with ODC and thereby sterically blocks ODC homodimerization.

Functionally, ornithine decarboxylase (ODC) antizyme protein that negatively regulates ODC activity and intracellular polyamine biosynthesis in response to increased intracellular polyamine levels. Binds to ODC monomers, inhibiting the assembly of the functional ODC homodimer, and targets the monomers for ubiquitin-independent proteolytic destruction by the 26S proteasome. In Schizosaccharomyces pombe (strain 972 / ATCC 24843) (Fission yeast), this protein is Ornithine decarboxylase antizyme (spa1).